Here is a 1388-residue protein sequence, read N- to C-terminus: DNA-directed RNA polymerase subunit beta (1388 aa).

Belongs to the RNA polymerase beta chain family. As to quaternary structure, the RNAP catalytic core consists of 2 alpha, 1 beta, 1 beta' and 1 omega subunit. When a sigma factor is associated with the core the holoenzyme is formed, which can initiate transcription.

The enzyme catalyses RNA(n) + a ribonucleoside 5'-triphosphate = RNA(n+1) + diphosphate. Functionally, DNA-dependent RNA polymerase catalyzes the transcription of DNA into RNA using the four ribonucleoside triphosphates as substrates. The polypeptide is DNA-directed RNA polymerase subunit beta (Stenotrophomonas maltophilia (strain K279a)).